The following is a 336-amino-acid chain: Ornithine carbamoyltransferase, catabolic (336 aa).

Carbamoyl phosphate-binding positions include 57–60 (STRT), Gln84, Arg108, and 135–138 (HPTQ). L-ornithine-binding positions include Asn168, Asp232, and 236 to 237 (SM). Carbamoyl phosphate is bound by residues 274–275 (CL) and Arg321.

Belongs to the aspartate/ornithine carbamoyltransferase superfamily. OTCase family.

The protein localises to the cytoplasm. The enzyme catalyses carbamoyl phosphate + L-ornithine = L-citrulline + phosphate + H(+). The protein operates within amino-acid degradation; L-arginine degradation via ADI pathway; carbamoyl phosphate from L-arginine: step 2/2. Functionally, reversibly catalyzes the transfer of the carbamoyl group from carbamoyl phosphate (CP) to the N(epsilon) atom of ornithine (ORN) to produce L-citrulline. This is Ornithine carbamoyltransferase, catabolic from Burkholderia pseudomallei (strain K96243).